The following is a 195-amino-acid chain: MAKLALAATSGKSCKILLGLRLLAFSATLSAAIVMGLNKETETFVVGKVGNTPIKATFTAKFDHTPAFVFFVVANAMVSFHNLLMIALQIFGGKMEFTGFRLLSVAILDMLNVTLISAAANAAAFMAEVGKNGNKHARWDKICDRFATYCDHGAGALIAAFAGVILMLIISAASISRLAQQNKCCSTTASPSVVP.

The Cytoplasmic portion of the chain corresponds to Met1–Lys15. Residues Ile16–Gly36 traverse the membrane as a helical segment. The Extracellular portion of the chain corresponds to Leu37–Ala67. The helical transmembrane segment at Phe68–Leu88 threads the bilayer. The Cytoplasmic portion of the chain corresponds to Gln89 to Ser104. A helical membrane pass occupies residues Val105 to Phe125. Topologically, residues Met126 to Ala154 are extracellular. The helical transmembrane segment at Gly155 to Ile175 threads the bilayer. Residues Ser176–Pro195 lie on the Cytoplasmic side of the membrane.

The protein belongs to the Casparian strip membrane proteins (CASP) family. As to quaternary structure, homodimer and heterodimers.

The protein localises to the cell membrane. In Arabidopsis lyrata subsp. lyrata (Lyre-leaved rock-cress), this protein is CASP-like protein 1B1.